A 317-amino-acid chain; its full sequence is Putative 12-oxophytodienoate reductase 10 (317 aa).

Residue 26–28 (PVG) participates in FMN binding. 117 to 120 (HGAN) contacts substrate. Tyr-122 acts as the Proton donor in catalysis. Arg-169 lines the FMN pocket. Residue Arg-209 coordinates substrate. FMN contacts are provided by residues Gly-244 and 265 to 266 (GR).

Belongs to the NADH:flavin oxidoreductase/NADH oxidase family. Requires FMN as cofactor.

Putative oxophytodienoate reductase that may be involved in the biosynthesis or metabolism of oxylipin signaling molecules. The chain is Putative 12-oxophytodienoate reductase 10 (OPR10) from Oryza sativa subsp. japonica (Rice).